A 3841-amino-acid polypeptide reads, in one-letter code: Transformation/transcription domain-associated protein (3841 aa).

2 disordered regions span residues 491 to 516 and 2002 to 2027; these read TPTV…PPAT and QQPE…MKRG. A compositionally biased stretch (pro residues) spans 498–515; the sequence is ALPPPAPPTPVTPAPPPA. A Bipartite nuclear localization signal motif is present at residues 2025-2040; sequence KRGMSVDSAQDVKRFR. The FAT domain maps to 2671-3239; sequence VLKYLGKTHN…YFPIRTLYLT (569 aa). The disordered stretch occupies residues 3249–3271; that stretch reads KSDSGQQQPSSAAAQTHSASDPG. Over residues 3251–3268 the composition is skewed to low complexity; that stretch reads DSGQQQPSSAAAQTHSAS. Residues 3482–3805 enclose the PI3K/PI4K catalytic domain; that stretch reads MPRVEIVQKH…AVTAIMTRLH (324 aa). Residues 3488–3494 form a G-loop region; sequence VQKHNTA. The segment at 3669–3677 is catalytic loop; it reads HLNRLNPEM. An activation loop region spans residues 3689-3714; sequence VSYFRFDINDATGDLDANRPVPFRLT. Positions 3809 to 3841 constitute an FATC domain; it reads QFEGGESKVNTLVAAANSLDNLCRMDPAWHPWL.

The protein belongs to the PI3/PI4-kinase family. TRA1 subfamily.

It localises to the nucleus. In terms of biological role, adapter protein, which is found in various multiprotein chromatin complexes with histone acetyltransferase activity (HAT), which gives a specific tag for epigenetic transcription activation. May be required for the mitotic checkpoint and normal cell cycle progression. May play a role in the formation and maintenance of the auditory system. This chain is Transformation/transcription domain-associated protein, found in Danio rerio (Zebrafish).